The primary structure comprises 104 residues: Replication restart protein PriB (104 aa).

One can recognise an SSB domain in the interval Met-1–Asp-101.

Belongs to the PriB family. As to quaternary structure, homodimer. Interacts with PriA and DnaT. Component of the replication restart primosome. Primosome assembly occurs via a 'hand-off' mechanism. PriA binds to replication forks, subsequently PriB then DnaT bind; DnaT then displaces ssDNA to generate the helicase loading substrate.

In terms of biological role, involved in the restart of stalled replication forks, which reloads the replicative helicase on sites other than the origin of replication; the PriA-PriB pathway is the major replication restart pathway. During primosome assembly it facilitates complex formation between PriA and DnaT on DNA; stabilizes PriA on DNA. Stimulates the DNA unwinding activity of PriA helicase. The protein is Replication restart protein PriB of Shigella dysenteriae serotype 1 (strain Sd197).